We begin with the raw amino-acid sequence, 73 residues long: Conotoxin CnIIIE (73 aa).

An N-terminal signal peptide occupies residues 1–19 (MSKLGVLLTICLLLFPLTA). A propeptide spanning residues 20–49 (LPMDGDQSVDRPAERMQDDISSEQYPLFNQ) is cleaved from the precursor. Cystine bridges form between Cys-53–Cys-72, Cys-54–Cys-70, and Cys-60–Cys-73.

The protein belongs to the conotoxin M superfamily. In terms of tissue distribution, expressed by the venom duct.

It is found in the secreted. Shows a paralytic effect in fish. The protein is Conotoxin CnIIIE of Conus consors (Singed cone).